We begin with the raw amino-acid sequence, 96 residues long: Bublin coiled-coil protein (96 aa).

Residues 39 to 79 (NSCLDDIEDRNDALNGKLHELLESNRQARKDFRQQLNDEEA) adopt a coiled-coil conformation. The interval 63–96 (NRQARKDFRQQLNDEEASPPPAEDPASRDTQTED) is disordered. The segment covering 87–96 (PASRDTQTED) has biased composition (basic and acidic residues).

It belongs to the UPF0184 (EST00098) family.

Its subcellular location is the cell junction. The protein resides in the cytoplasm. It localises to the cytoskeleton. In terms of biological role, essential for intermediate filament organization in intestinal cells, interacts with intermediate filament and regulates intestinal lumen morphology. This chain is Bublin coiled-coil protein (bbln), found in Ctenopharyngodon idella (Grass carp).